We begin with the raw amino-acid sequence, 313 residues long: Probable cell division protein WhiA (313 aa).

The H-T-H motif DNA-binding region spans 275 to 308 (SLRELGELAQPPLSKSCVNHRLRKLEQIAEHILA).

This sequence belongs to the WhiA family.

Involved in cell division and chromosome segregation. The polypeptide is Probable cell division protein WhiA (Desulforudis audaxviator (strain MP104C)).